We begin with the raw amino-acid sequence, 508 residues long: Protein adenylyltransferase Fic (508 aa).

Residues 48–70 form a helical membrane-spanning segment; the sequence is FYRFALFFIAGSFAAFSFHALTS. 2 TPR repeats span residues 132–165 and 166–200; these read ALGA…APKH and PEVL…CPSN. The short motif at 257-262 is the Inhibitory (S/T)XXXE(G/N) motif element; sequence SVGIEG. ATP contacts are provided by residues glutamate 261 and 342–345; that span reads VGGH. One can recognise a Fido domain in the interval 311 to 446; sequence ITIKDILELH…IRPFVRFIAD (136 aa). Histidine 389 is a catalytic residue. ATP-binding positions include 393–400, 425–426, and asparagine 433; these read DGNGRTSR and YY.

Belongs to the fic family. As to quaternary structure, homodimer.

It is found in the membrane. It carries out the reaction L-tyrosyl-[protein] + ATP = O-(5'-adenylyl)-L-tyrosyl-[protein] + diphosphate. The enzyme catalyses L-threonyl-[protein] + ATP = 3-O-(5'-adenylyl)-L-threonyl-[protein] + diphosphate. It catalyses the reaction 3-O-(5'-adenylyl)-L-threonyl-[protein] + H2O = L-threonyl-[protein] + AMP + H(+). The side chain of Glu-261 determines which of the two opposing activities (AMPylase or de-AMPylase) will take place. In response to endoplasmic reticulum stress, mediates de-AMPylase activity. Adenylyltransferase activity is inhibited by the inhibitory helix present at the N-terminus: Glu-261 binds ATP and competes with ATP-binding at Arg-400, thereby preventing adenylyltransferase activity. In unstressed cells, disengagement of Glu-261 promotes adenylyltransferase activity. Activation dissociates ATP-binding from Glu-261, allowing ordered binding of the entire ATP moiety with the alpha-phosphate in an orientation that is productive for accepting an incoming target hydroxyl side chain. Protein that can both mediate the addition of adenosine 5'-monophosphate (AMP) to specific residues of target proteins (AMPylation), and the removal of the same modification from target proteins (de-AMPylation), depending on the context. The side chain of Glu-261 determines which of the two opposing activities (AMPylase or de-AMPylase) will take place. Acts as a key regulator of the unfolded protein response (UPR) by mediating AMPylation or de-AMPylation of Hsc70-3/BiP. In unstressed cells, acts as an adenylyltransferase by mediating AMPylation of Hsc70-3/BiP at 'Thr-518', thereby inactivating it. In response to endoplasmic reticulum stress, acts as a phosphodiesterase by mediating removal of ATP (de-AMPylation) from Hsc70-3/BiP at 'Thr-518', leading to restore HSPA5/BiP activity. The sequence is that of Protein adenylyltransferase Fic from Drosophila persimilis (Fruit fly).